A 372-amino-acid chain; its full sequence is Meiotic drive suppressor wtf18 (372 aa).

Transmembrane regions (helical) follow at residues 86–106, 120–140, 153–173, 197–217, 233–253, and 257–277; these read FLLR…TAWV, AFSV…FCFF, VTVI…AQCV, DLVV…FGCV, CSIS…IWTL, and LFGL…TKGL.

This sequence belongs to the WTF family. As to quaternary structure, homomer. Interacts with other proteins that exhibit high sequence similarity.

It localises to the spore membrane. Its subcellular location is the vacuole membrane. Acts as a suppressor component of the dual wtf meiotic drive system, and can suppress but not confer meiotic drive by compatible poisons. Wtf meiotic drive systems promote unequal transmission of alleles from the parental zygote to progeny spores by encoding a poison and an antidote from the same locus; the poison is trans-acting and forms toxic aggregates in all spores within an ascus, wherease the antidote is spore-specific and targets aggregates for degradation by the vacuole. Meiotic drive by wtf systems therefore lead to poisoning of all progeny that do not inherit the dual poison/antidote allele, or express a compatible antidote. The protein is Meiotic drive suppressor wtf18 of Schizosaccharomyces pombe (strain 972 / ATCC 24843) (Fission yeast).